Here is a 230-residue protein sequence, read N- to C-terminus: uncharacterized protein (230 aa).

Disordered stretches follow at residues 63 to 90 and 194 to 230; these read TDCQ…KKTI and KKLE…YKEH. Residues 194–217 are compositionally biased toward basic and acidic residues; that stretch reads KKLEEREQMDKHPQDRDNKDKEVN.

This is an uncharacterized protein from Caenorhabditis elegans.